The following is a 936-amino-acid chain: Altered inheritance of mitochondria protein 3 (936 aa).

Disordered stretches follow at residues 1 to 315 (MGFW…LNQN), 341 to 795 (MSST…EATG), 818 to 893 (NLEK…KSLE), and 908 to 936 (SAAD…HKLK). The segment covering 36–54 (ASKKHYNNSKARRERKSGK) has biased composition (basic residues). 3 positions are modified to phosphoserine: Ser57, Ser58, and Ser64. A compositionally biased stretch (acidic residues) spans 59–68 (DEEYESEDEM). Residues 69–84 (EHERKPTDIRSLKDPK) show a composition bias toward basic and acidic residues. Composition is skewed to low complexity over residues 93–105 (PGQK…QQQQ) and 130–152 (QSQY…GVMP). Over residues 166-244 (GSNSNATSYQ…YVSHGSTNLG (79 aa)) the composition is skewed to polar residues. Low complexity-rich tracts occupy residues 245 to 267 (QSQF…VLPS) and 306 to 315 (QQQQQPLNQN). Over residues 341-354 (MSSTTNMQDSNPSY) the composition is skewed to polar residues. The span at 366–382 (GGQPPVPVRMQPQPPQP) shows a compositional bias: pro residues. The segment covering 453 to 462 (IQPNTTSSAA) has biased composition (polar residues). A Phosphoserine modification is found at Ser463. Basic and acidic residues-rich tracts occupy residues 475-489 (DNER…DEST), 513-528 (HGLD…KNAS), and 598-615 (EIKD…DRNV). Low complexity-rich tracts occupy residues 622-632 (QSKSQSQSQSQ) and 656-665 (SQSSNSSDSS). A Phosphothreonine modification is found at Thr718. Residues 738–748 (DSSKDANKYEK) are compositionally biased toward basic and acidic residues. The segment covering 752-763 (PVTSSIQAQQST) has biased composition (polar residues). Thr850 carries the post-translational modification Phosphothreonine. The span at 851 to 868 (PPRPPPSRSSPKKVPPVV) shows a compositional bias: pro residues. Positions 877–888 (KKPPVVPKKKPL) are enriched in basic residues.

It belongs to the AIM3 family. Interacts with RVS167.

Its subcellular location is the membrane raft. The polypeptide is Altered inheritance of mitochondria protein 3 (AIM3) (Saccharomyces cerevisiae (strain RM11-1a) (Baker's yeast)).